We begin with the raw amino-acid sequence, 241 residues long: Thyroid transcription factor 1-associated protein 26 (241 aa).

2 disordered regions span residues methionine 1–valine 22 and lysine 182–lysine 205. A compositionally biased stretch (basic and acidic residues) spans lysine 186–arginine 202.

This sequence belongs to the TAP26 family. As to quaternary structure, interacts with NKX2-1. In terms of tissue distribution, ubiquitously expressed. In lung, expression is restricted to the alveolar epithelial cells.

It localises to the nucleus. Its function is as follows. Component of the transcription complexes of the pulmonary surfactant-associated protein-B (SFTPB) and -C (SFTPC). Enhances homeobox protein Nkx-2.1-activated SFTPB and SFTPC promoter activities. This Homo sapiens (Human) protein is Thyroid transcription factor 1-associated protein 26 (CCDC59).